Consider the following 667-residue polypeptide: WD40 repeat-containing protein DDB_G0271002 (667 aa).

2 WD repeats span residues 165–204 (NHGV…PQET) and 210–249 (KHKH…LLRI). A compositionally biased stretch (low complexity) spans 278–293 (SSNSRDNNNNNSNSNN). Disordered regions lie at residues 278 to 301 (SSNS…GIII), 316 to 345 (LVEN…DNDD), and 389 to 440 (DIIF…ATTT). Residues 325-345 (PMPEEEEEEEEEEVNQVDNDD) show a composition bias toward acidic residues. A compositionally biased stretch (low complexity) spans 400-410 (NQHQQQQQQNQ). The segment covering 411–428 (EIEEEGQEGQEEQEDGTE) has biased composition (acidic residues). Over residues 429–440 (NENNQGTIATTT) the composition is skewed to low complexity.

The sequence is that of WD40 repeat-containing protein DDB_G0271002 from Dictyostelium discoideum (Social amoeba).